The sequence spans 440 residues: MTTGGKNTFYIHTFGCQMNQADSATITSLLQQAGYVAAESEDRAGIILLNTCAVRENAVDRIEHYLQHLQGLKKRDKRLIVGILGCIPQHQREEMFATSPAIDLLAGPDTYRTLPQLIEQARSGAKPFSLDFNVAETYEGIDPVRQGSISAFVPVMRGCNNMCAYCVVPFTRGRERSHPFRAVMGEVQKLVASGYSEITLLGQNVNSYDDPEQGVNFAALLDAVSCAAPQARVRFTTSHPKDISGELVRTIANRPNICNHIHLPVQSGSTATLGRMNRGHTIEEYLEKIALIRSLLPGVTLSTDIIAGFCGEQEEDHQASLELLSTLRFDSAYMFYYSTRPGTFAARTLVDDVPEVVKKRRLQEIIDLQNTISGELFQQAIGSVVEVLAESESKRSAEQLMGRTPGNRAVVFDREGYRPGDLVRVLITAATSATLTGRPV.

The MTTase N-terminal domain maps to 7–123 (NTFYIHTFGC…LPQLIEQARS (117 aa)). [4Fe-4S] cluster-binding residues include Cys16, Cys52, Cys86, Cys159, Cys163, and Cys166. Residues 145 to 375 (RQGSISAFVP…IDLQNTISGE (231 aa)) form the Radical SAM core domain. Positions 378 to 440 (QQAIGSVVEV…TSATLTGRPV (63 aa)) constitute a TRAM domain.

The protein belongs to the methylthiotransferase family. MiaB subfamily. As to quaternary structure, monomer. It depends on [4Fe-4S] cluster as a cofactor.

The protein localises to the cytoplasm. The catalysed reaction is N(6)-dimethylallyladenosine(37) in tRNA + (sulfur carrier)-SH + AH2 + 2 S-adenosyl-L-methionine = 2-methylsulfanyl-N(6)-dimethylallyladenosine(37) in tRNA + (sulfur carrier)-H + 5'-deoxyadenosine + L-methionine + A + S-adenosyl-L-homocysteine + 2 H(+). Functionally, catalyzes the methylthiolation of N6-(dimethylallyl)adenosine (i(6)A), leading to the formation of 2-methylthio-N6-(dimethylallyl)adenosine (ms(2)i(6)A) at position 37 in tRNAs that read codons beginning with uridine. This is tRNA-2-methylthio-N(6)-dimethylallyladenosine synthase from Pelodictyon phaeoclathratiforme (strain DSM 5477 / BU-1).